Here is a 155-residue protein sequence, read N- to C-terminus: Cathelicidin-1 (155 aa).

Positions 1-29 are cleaved as a signal peptide; that stretch reads METQRASLSLGRCSLWLLLLGLALPSASA. Gln-30 is subject to Pyrrolidone carboxylic acid. Positions 30–143 are excised as a propeptide; the sequence is QVLSYREAVL…KQPWAPPQAA (114 aa). Intrachain disulfides connect Cys-85–Cys-96, Cys-107–Cys-124, and Cys-146–Cys-154.

Belongs to the cathelicidin family.

It is found in the secreted. In terms of biological role, potent microbicidal activity; active against S.aureus and E.coli. This chain is Cathelicidin-1 (CATHL1A), found in Ovis aries (Sheep).